Consider the following 161-residue polypeptide: Carboxysome assembly protein CcmN (161 aa).

The disordered stretch occupies residues 111-140; it reads LLSAETPPTTATVSSSEPAGRSPQSSAIAH. Residues 116–137 show a composition bias toward polar residues; the sequence is TPPTTATVSSSEPAGRSPQSSA. Residues 144–161 carry the Encapsulation peptide motif; the sequence is VYGKEQFLRMRQSMFPDR.

Belongs to the CcmN family. As to quaternary structure, interacts with CcmM via the N-terminus of CcmN. Interacts with CcmK2 via the 18 C-terminal residues.

It is found in the carboxysome. In terms of biological role, required for carboxysome formation; the N-terminus interacts with CcmM which itself binds RuBisCO (ribulose bisphosphate carboxylase, rbcL-rbcS), while the C-terminal 18 residues interact with carboxysome shell protein CcmK2. Required for growth in normal air. Its function is as follows. Beta-carboxysome assembly initiates when soluble RuBisCO is condensed into a liquid matrix in a pre-carboxysome by the RbcS-like domains of probably both CcmM58 and CcmM35. CcmN interacts with the N-terminus of CcmM58, and then recruits the CcmK2 major shell protein via CcmN's encapsulation peptide. Shell formation requires CcmK proteins and CcmO. CcmL caps the otherwise elongated carboxysome. Once fully encapsulated carboxysomes are formed, they migrate within the cell probably via interactions with the cytoskeleton. The chain is Carboxysome assembly protein CcmN from Synechococcus elongatus (strain ATCC 33912 / PCC 7942 / FACHB-805) (Anacystis nidulans R2).